The primary structure comprises 153 residues: Type II secretion system core protein G (153 aa).

The propeptide at Met1–Gly7 is leader sequence. N-methylphenylalanine is present on Phe8. A helical transmembrane segment spans residues Phe8–Val28. 2 disordered regions span residues Glu68–Gly91 and Met126–Pro153. A compositionally biased stretch (low complexity) spans Gly134 to His143. Positions Asn144–Pro153 are enriched in gly residues.

Belongs to the GSP G family. In terms of assembly, type II secretion system is composed of four main components: the outer membrane complex, the inner membrane complex, the cytoplasmic secretion ATPase and the periplasm-spanning pseudopilus. Forms homomultimers. Cleaved by the prepilin peptidase. Post-translationally, methylated by prepilin peptidase at the amino group of the N-terminal phenylalanine once the leader sequence is cleaved.

The protein localises to the cell inner membrane. In terms of biological role, core component of the type II secretion system required for the energy-dependent secretion of extracellular factors such as proteases and toxins from the periplasm. Pseudopilin (pilin-like) protein that polymerizes to form the pseudopilus. Further polymerization triggers pseudopilus growth. The chain is Type II secretion system core protein G (outG) from Dickeya chrysanthemi (Pectobacterium chrysanthemi).